The following is a 240-amino-acid chain: Aquaporin Z (240 aa).

2 consecutive transmembrane segments (helical) span residues 10 to 30 (MIGT…AAGF) and 35 to 55 (IGLV…AYAI). The NPA 1 motif lies at 64-66 (NPA). 3 helical membrane passes run 90-110 (VLGA…AAGF), 131-151 (LVAC…VIMG), and 160-180 (GFAP…SIPV). The NPA 2 signature appears at 186-188 (NPA). The helical transmembrane segment at 202-222 (IGQLWLFWVAPLLGGVLGGVI) threads the bilayer.

Belongs to the MIP/aquaporin (TC 1.A.8) family. As to quaternary structure, homotetramer.

Its subcellular location is the cell inner membrane. The enzyme catalyses H2O(in) = H2O(out). Channel that permits osmotically driven movement of water in both directions. It is involved in the osmoregulation and in the maintenance of cell turgor during volume expansion in rapidly growing cells. It mediates rapid entry or exit of water in response to abrupt changes in osmolarity. The protein is Aquaporin Z of Rhodopseudomonas palustris (strain ATCC BAA-98 / CGA009).